We begin with the raw amino-acid sequence, 1026 residues long: Multidrug resistance protein MdtC (1026 aa).

A run of 11 helical transmembrane segments spans residues 15 to 35, 333 to 353, 360 to 380, 387 to 407, 431 to 451, 463 to 483, 528 to 548, 853 to 873, 897 to 917, 953 to 973, and 984 to 1004; these read ILIA…LPVA, EVEE…FLFL, LIPA…MYLC, LSLM…IVVL, VGFT…PLLL, FAVT…TLTP, LVGV…IAIP, LILI…LYES, LFNA…IGIV, PIMM…LSGG, and ITIV…TPVV.

Belongs to the resistance-nodulation-cell division (RND) (TC 2.A.6) family. MdtC subfamily. In terms of assembly, part of a tripartite efflux system composed of MdtA, MdtB and MdtC. MdtC forms a heteromultimer with MdtB.

The protein resides in the cell inner membrane. This is Multidrug resistance protein MdtC from Salmonella dublin (strain CT_02021853).